Consider the following 249-residue polypeptide: 5-amino-6-(5-phospho-D-ribitylamino)uracil phosphatase YcsE (249 aa).

The Nucleophile role is filled by aspartate 16. Mg(2+) is bound at residue aspartate 16. Methionine 17 contributes to the phosphate binding site. Position 18 (aspartate 18) interacts with Mg(2+). Phosphate-binding positions include 50 to 51 (TG) and lysine 177. Residues aspartate 200 and serine 201 each contribute to the Mg(2+) site. Phosphate is bound at residue asparagine 203.

This sequence belongs to the HAD-like hydrolase superfamily. Cof family. It depends on Mg(2+) as a cofactor.

It carries out the reaction 5-amino-6-(5-phospho-D-ribitylamino)uracil + H2O = 5-amino-6-(D-ribitylamino)uracil + phosphate. It functions in the pathway cofactor biosynthesis; riboflavin biosynthesis; 5-amino-6-(D-ribitylamino)uracil from GTP: step 4/4. Its function is as follows. Catalyzes the dephosphorylation of the riboflavin precursor 5-amino-6-(5-phospho-D-ribitylamino)uracil and of flavin mononucleotide (FMN) in vitro. To a lesser extent, may also catalyze the dephosphorylation of a broad range of substrates such as phosphorylated sugars and triphosphate nucleotides in vitro. In Bacillus subtilis (strain 168), this protein is 5-amino-6-(5-phospho-D-ribitylamino)uracil phosphatase YcsE (ycsE).